Consider the following 84-residue polypeptide: Phosphoribosylformylglycinamidine synthase subunit PurS (84 aa).

The protein belongs to the PurS family. Homodimer or homotetramer. Part of the FGAM synthase complex composed of 1 PurL, 1 PurQ and 2 PurS subunits.

It is found in the cytoplasm. It catalyses the reaction N(2)-formyl-N(1)-(5-phospho-beta-D-ribosyl)glycinamide + L-glutamine + ATP + H2O = 2-formamido-N(1)-(5-O-phospho-beta-D-ribosyl)acetamidine + L-glutamate + ADP + phosphate + H(+). It participates in purine metabolism; IMP biosynthesis via de novo pathway; 5-amino-1-(5-phospho-D-ribosyl)imidazole from N(2)-formyl-N(1)-(5-phospho-D-ribosyl)glycinamide: step 1/2. Part of the phosphoribosylformylglycinamidine synthase complex involved in the purines biosynthetic pathway. Catalyzes the ATP-dependent conversion of formylglycinamide ribonucleotide (FGAR) and glutamine to yield formylglycinamidine ribonucleotide (FGAM) and glutamate. The FGAM synthase complex is composed of three subunits. PurQ produces an ammonia molecule by converting glutamine to glutamate. PurL transfers the ammonia molecule to FGAR to form FGAM in an ATP-dependent manner. PurS interacts with PurQ and PurL and is thought to assist in the transfer of the ammonia molecule from PurQ to PurL. This is Phosphoribosylformylglycinamidine synthase subunit PurS from Bacillus subtilis (strain 168).